A 299-amino-acid chain; its full sequence is F-actin-capping protein subunit alpha-3 (299 aa).

Position 290 is a phosphoserine (serine 290).

The protein belongs to the F-actin-capping protein alpha subunit family. Component of the F-actin capping complex, composed of a heterodimer of an alpha and a beta subunit. Component of the WASH complex, composed of F-actin-capping protein subunit alpha (CAPZA1, CAPZA2 or CAPZA3), F-actin-capping protein subunit beta (CAPZB), WASH (WASHC1, WASH2P, WASH3P, WASH4P, WASH5P or WASH6P), WASHC2 (WASHC2A or WASHC2C), WASHC3, WASHC4 and WASHC5. In terms of tissue distribution, expressed exclusively in testis and sperm. Highest expression is found in the neck region of ejaculated sperm with lower levels found in the tail and postacrosome region.

The protein localises to the cytoplasm. It is found in the cytoskeleton. F-actin-capping proteins bind in a Ca(2+)-independent manner to the fast growing ends of actin filaments (barbed end) thereby blocking the exchange of subunits at these ends. Unlike other capping proteins (such as gelsolin and severin), these proteins do not sever actin filaments. May play a role in the morphogenesis of spermatid. The protein is F-actin-capping protein subunit alpha-3 (CAPZA3) of Homo sapiens (Human).